The following is a 154-amino-acid chain: Myoglobin (154 aa).

The Globin domain maps to 2 to 148; sequence ELSDQEWKHV…FRNDMASKYK (147 aa). A nitrite-binding site is contributed by His65. An O2-binding site is contributed by His65. His94 contacts heme b.

Belongs to the globin family. Monomeric.

The protein localises to the cytoplasm. The protein resides in the sarcoplasm. It carries out the reaction Fe(III)-heme b-[protein] + nitric oxide + H2O = Fe(II)-heme b-[protein] + nitrite + 2 H(+). It catalyses the reaction H2O2 + AH2 = A + 2 H2O. In terms of biological role, monomeric heme protein which primary function is to store oxygen and facilitate its diffusion within muscle tissues. Reversibly binds oxygen through a pentacoordinated heme iron and enables its timely and efficient release as needed during periods of heightened demand. Depending on the oxidative conditions of tissues and cells, and in addition to its ability to bind oxygen, it also has a nitrite reductase activity whereby it regulates the production of bioactive nitric oxide. Under stress conditions, like hypoxia and anoxia, it also protects cells against reactive oxygen species thanks to its pseudoperoxidase activity. This is Myoglobin (MB) from Alligator mississippiensis (American alligator).